The following is a 2531-amino-acid chain: Mediator of RNA polymerase II transcription subunit 12 (2531 aa).

4 disordered regions span residues 1-41 (MLSM…VKHG), 204-283 (QNHD…GSVM), 584-604 (VSRRREEDQVEPRPPYEPKQD), and 742-762 (TTATKTSPPPPAPPPTTTHGF). Low complexity predominate over residues 210–247 (SSNGTTSGSLTAAGNGPASNGSTGTSSINSVTGSSAST). Basic and acidic residues predominate over residues 586 to 604 (RRREEDQVEPRPPYEPKQD). A Phosphothreonine modification is found at threonine 745. Serine 748 and serine 781 each carry phosphoserine. Residues 748 to 757 (SPPPPAPPPT) are compositionally biased toward pro residues. A compositionally biased stretch (basic and acidic residues) spans 796 to 805 (EKGQQHEAPD). The tract at residues 796-824 (EKGQQHEAPDSPKIGPPGDGETNPGGSIS) is disordered. Residues serine 806 and serine 1356 each carry the phosphoserine modification. Residue threonine 1360 is modified to Phosphothreonine. Polar residues-rich tracts occupy residues 1585–1595 (VSKSDCNSSGS) and 1901–1910 (TPSSVDQSPS). 4 disordered regions span residues 1585 to 1608 (VSKSDCNSSGSGDEREKSNSCHSS), 1898 to 2092 (KADT…NQYA), 2114 to 2218 (QALS…GMAP), and 2469 to 2508 (MGGGAGGGMGAGPQQGGGAVGGGAGGGMVPQQQSMNQQQT). The span at 1919-1933 (GRGKGTTTRKRKPKN) shows a compositional bias: basic residues. Low complexity-rich tracts occupy residues 1938 to 2038 (PVVN…QQLN) and 2045 to 2055 (QPNPQMNFMQQ). The segment covering 2056–2066 (GPGGGGAGPQG) has biased composition (gly residues). Composition is skewed to low complexity over residues 2067–2080 (MPGQQQQWHNAPQQ), 2121–2132 (RQRQPFQQQAQQ), and 2139–2205 (NPMQ…QQQQ). Over residues 2469–2496 (MGGGAGGGMGAGPQQGGGAVGGGAGGGM) the composition is skewed to gly residues. The span at 2497 to 2507 (VPQQQSMNQQQ) shows a compositional bias: low complexity.

This sequence belongs to the Mediator complex subunit 12 family. Component of the Cdk8 module of the Mediator complex, composed of CycC, Cdk8, kto and skd.

It is found in the nucleus. Functionally, component of the Mediator complex, a coactivator involved in regulated gene transcription of nearly all RNA polymerase II-dependent genes. Mediator functions as a bridge to convey information from gene-specific regulatory proteins to the basal RNA polymerase II transcription machinery. Mediator is recruited to promoters by direct interactions with regulatory proteins and serves as a scaffold for the assembly of a functional preinitiation complex with RNA polymerase II and the general transcription factors. Required for leg and eye development and macrochaete specification or differentiation. The protein is Mediator of RNA polymerase II transcription subunit 12 (kto) of Drosophila melanogaster (Fruit fly).